The chain runs to 284 residues: Two-pore potassium channel 4 (284 aa).

The tract at residues 1–21 (MEEENLLNENLLHPNESSPEE) is disordered. The Cytoplasmic portion of the chain corresponds to 1–31 (MEEENLLNENLLHPNESSPEETQVTTVSKSK). The helical transmembrane segment at 32–52 (WTILVLAMILLLVYLTFGVCT) threads the bilayer. An intramembrane region (pore-forming) is located at residues 70 to 89 (DAFYFSIVTFSTVGYGDIVP). A helical transmembrane segment spans residues 93–113 (TTKILTIVLVSTGVVFLDYLL). The Cytoplasmic segment spans residues 114 to 156 (NRVVSHVLSLQENAILDRINKTRNRAIRDHIAEDGKIRLKWKL). A helical membrane pass occupies residues 157 to 177 (CLAFCAVGLCVGSGALFLHVF). Positions 184–203 (DSVYLSVISVTTVGYGDKTF) form an intramembrane region, pore-forming. Residues 211–231 (FAVFWLLLSTIAMATLFLYLA) traverse the membrane as a helical segment. The Cytoplasmic segment spans residues 232–284 (EMRIDRTTVMKLPPSESEFIVFKLRESGRISEDDIKQIVREFENLEEVPSSGS).

It belongs to the two pore domain potassium channel (TC 1.A.1.7) family. As to quaternary structure, homodimer. As to expression, predominantly expressed in pollen.

Its subcellular location is the cell membrane. Voltage-independent, instantaneously activating, potassium-selective plasma membrane ion channel. Open rectifier. Regulated by cytoplasmic pH and extra-cellular calcium. Has some permeability for Rb(+) and NH(4)(+), but none for Na(+) or Li(+). The sequence is that of Two-pore potassium channel 4 (TPK4) from Arabidopsis thaliana (Mouse-ear cress).